The following is a 382-amino-acid chain: Mannitol-1-phosphate 5-dehydrogenase (382 aa).

3-14 contacts NAD(+); it reads ALHFGAGNIGRG. At lysine 269 the chain carries N6-acetyllysine.

It belongs to the mannitol dehydrogenase family.

It carries out the reaction D-mannitol 1-phosphate + NAD(+) = beta-D-fructose 6-phosphate + NADH + H(+). This is Mannitol-1-phosphate 5-dehydrogenase from Escherichia coli (strain ATCC 8739 / DSM 1576 / NBRC 3972 / NCIMB 8545 / WDCM 00012 / Crooks).